The sequence spans 366 residues: Putative agmatine deiminase (366 aa).

The active-site Amidino-cysteine intermediate is Cys-357.

The protein belongs to the agmatine deiminase family.

It catalyses the reaction agmatine + H2O = N-carbamoylputrescine + NH4(+). This Lactococcus lactis subsp. lactis (strain IL1403) (Streptococcus lactis) protein is Putative agmatine deiminase.